A 257-amino-acid polypeptide reads, in one-letter code: BTB/POZ domain-containing protein KCTD1 (257 aa).

The disordered stretch occupies residues 1–25 (MSRPLITRSPASPLNNQGIPTPAQL). 2 positions are modified to phosphoserine: S9 and S12. Polar residues predominate over residues 9-25 (SPASPLNNQGIPTPAQL). A BTB domain is found at 30 to 100 (APVHIDVGGH…LRTSKLLIPD (71 aa)).

As to quaternary structure, forms homopentamers. Interacts with KCTD15, probably forming heteropentamers depending on its abundance in a cell-type dependent manner. Interacts with TFAP2A, TFAP2B and TFAP2C via the BTB domain. Sumoylated.

The protein localises to the nucleus. In terms of biological role, may repress the transcriptional activity of AP-2 family members, including TFAP2A, TFAP2B and TFAP2C to various extent. The protein is BTB/POZ domain-containing protein KCTD1 (KCTD1) of Bos taurus (Bovine).